A 461-amino-acid polypeptide reads, in one-letter code: Phytase PHO112 (461 aa).

3 cysteine pairs are disulfide-bonded: Cys-62-Cys-384, Cys-261-Cys-274, and Cys-404-Cys-412. Residues Arg-72, His-73, Arg-76, and Ser-79 each coordinate 1D-myo-inositol hexakisphosphate. His-73 functions as the Nucleophile in the catalytic mechanism. N-linked (GlcNAc...) asparagine glycosylation is found at Asn-97 and Asn-157. Arg-169 lines the 1D-myo-inositol hexakisphosphate pocket. 2 N-linked (GlcNAc...) asparagine glycosylation sites follow: Asn-229 and Asn-248. Residue Lys-293 participates in 1D-myo-inositol hexakisphosphate binding. Asn-302 and Asn-313 each carry an N-linked (GlcNAc...) asparagine glycan. 1D-myo-inositol hexakisphosphate contacts are provided by His-334 and Asp-335. 2 N-linked (GlcNAc...) asparagine glycosylation sites follow: Asn-437 and Asn-452.

It belongs to the histidine acid phosphatase family. In terms of assembly, monomer.

It is found in the secreted. It catalyses the reaction 1D-myo-inositol hexakisphosphate + H2O = 1D-myo-inositol 1,2,4,5,6-pentakisphosphate + phosphate. The enzyme catalyses 1D-myo-inositol 1,2,4,5,6-pentakisphosphate + H2O = 1D-myo-inositol 1,2,5,6-tetrakisphosphate + phosphate. The catalysed reaction is 1D-myo-inositol 1,2,5,6-tetrakisphosphate + H2O = 1D-myo-inositol 1,2,6-trisphosphate + phosphate. It carries out the reaction 1D-myo-inositol 1,2,6-trisphosphate + H2O = 1D-myo-inositol 1,2-bisphosphate + phosphate. It catalyses the reaction 1D-myo-inositol 1,2-bisphosphate + H2O = 1D-myo-inositol 2-phosphate + phosphate. Catalyzes the phosphate monoester hydrolysis of phytic acid (myo-inositol hexakisphosphate), which results in the stepwise formation of myo-inositol pentakis-, tetrakis-, tris-, bis-, and monophosphates, as well as the liberation of inorganic phosphate. Myo-inositol 2-monophosphate is the end product. Responsible of about 25% of the phytase activity. The residual phytase activity might be contributed by other cytosolic or cellular enzymes such as acid phosphatase that also degraded the substrate phytate. Is essential for human tissue damage during infection. This Candida albicans (strain SC5314 / ATCC MYA-2876) (Yeast) protein is Phytase PHO112 (PHO112).